A 112-amino-acid chain; its full sequence is Small ribosomal subunit protein bS6 (112 aa).

The protein belongs to the bacterial ribosomal protein bS6 family.

Its function is as follows. Binds together with bS18 to 16S ribosomal RNA. The sequence is that of Small ribosomal subunit protein bS6 from Chlamydia caviae (strain ATCC VR-813 / DSM 19441 / 03DC25 / GPIC) (Chlamydophila caviae).